Consider the following 337-residue polypeptide: Methylthioribose-1-phosphate isomerase (337 aa).

Substrate-binding positions include 47 to 49, Arg81, and Gln184; that span reads RGA. Asp225 functions as the Proton donor in the catalytic mechanism. Residue 235–236 participates in substrate binding; that stretch reads NK.

This sequence belongs to the eIF-2B alpha/beta/delta subunits family. MtnA subfamily.

It carries out the reaction 5-(methylsulfanyl)-alpha-D-ribose 1-phosphate = 5-(methylsulfanyl)-D-ribulose 1-phosphate. Its pathway is amino-acid biosynthesis; L-methionine biosynthesis via salvage pathway; L-methionine from S-methyl-5-thio-alpha-D-ribose 1-phosphate: step 1/6. Functionally, catalyzes the interconversion of methylthioribose-1-phosphate (MTR-1-P) into methylthioribulose-1-phosphate (MTRu-1-P). The sequence is that of Methylthioribose-1-phosphate isomerase from Synechococcus sp. (strain CC9605).